Reading from the N-terminus, the 168-residue chain is Probable acetolactate synthase small subunit (168 aa).

One can recognise an ACT domain in the interval Ile10–Pro84.

It belongs to the acetolactate synthase small subunit family. Dimer of large and small chains.

It carries out the reaction 2 pyruvate + H(+) = (2S)-2-acetolactate + CO2. The protein operates within amino-acid biosynthesis; L-isoleucine biosynthesis; L-isoleucine from 2-oxobutanoate: step 1/4. It participates in amino-acid biosynthesis; L-valine biosynthesis; L-valine from pyruvate: step 1/4. This chain is Probable acetolactate synthase small subunit (ilvH), found in Methanothermobacter thermautotrophicus (strain ATCC 29096 / DSM 1053 / JCM 10044 / NBRC 100330 / Delta H) (Methanobacterium thermoautotrophicum).